The following is a 227-amino-acid chain: Cytochrome c oxidase subunit 2 (227 aa).

Residues 1-14 (MAYPFQLGLQDATS) are Mitochondrial intermembrane-facing. Residues 15-45 (PIMEELLHFHDHTLMIVFLISSLVLYIISLM) traverse the membrane as a helical segment. At 46–59 (LTTKLTHTSTMDAQ) the chain is on the mitochondrial matrix side. A helical transmembrane segment spans residues 60–87 (EVETVWTILPAIILILIALPSLRILYMM). At 88 to 227 (DEINNPSLTV…YFETWSALMV (140 aa)) the chain is on the mitochondrial intermembrane side. The Cu cation site is built by His-161, Cys-196, Glu-198, Cys-200, His-204, and Met-207. Residue Glu-198 participates in Mg(2+) binding. Position 218 is a phosphotyrosine (Tyr-218).

It belongs to the cytochrome c oxidase subunit 2 family. Component of the cytochrome c oxidase (complex IV, CIV), a multisubunit enzyme composed of 14 subunits. The complex is composed of a catalytic core of 3 subunits MT-CO1, MT-CO2 and MT-CO3, encoded in the mitochondrial DNA, and 11 supernumerary subunits COX4I, COX5A, COX5B, COX6A, COX6B, COX6C, COX7A, COX7B, COX7C, COX8 and NDUFA4, which are encoded in the nuclear genome. The complex exists as a monomer or a dimer and forms supercomplexes (SCs) in the inner mitochondrial membrane with NADH-ubiquinone oxidoreductase (complex I, CI) and ubiquinol-cytochrome c oxidoreductase (cytochrome b-c1 complex, complex III, CIII), resulting in different assemblies (supercomplex SCI(1)III(2)IV(1) and megacomplex MCI(2)III(2)IV(2)). Found in a complex with TMEM177, COA6, COX18, COX20, SCO1 and SCO2. Interacts with TMEM177 in a COX20-dependent manner. Interacts with COX20. Interacts with COX16. The cofactor is Cu cation.

The protein resides in the mitochondrion inner membrane. It catalyses the reaction 4 Fe(II)-[cytochrome c] + O2 + 8 H(+)(in) = 4 Fe(III)-[cytochrome c] + 2 H2O + 4 H(+)(out). Functionally, component of the cytochrome c oxidase, the last enzyme in the mitochondrial electron transport chain which drives oxidative phosphorylation. The respiratory chain contains 3 multisubunit complexes succinate dehydrogenase (complex II, CII), ubiquinol-cytochrome c oxidoreductase (cytochrome b-c1 complex, complex III, CIII) and cytochrome c oxidase (complex IV, CIV), that cooperate to transfer electrons derived from NADH and succinate to molecular oxygen, creating an electrochemical gradient over the inner membrane that drives transmembrane transport and the ATP synthase. Cytochrome c oxidase is the component of the respiratory chain that catalyzes the reduction of oxygen to water. Electrons originating from reduced cytochrome c in the intermembrane space (IMS) are transferred via the dinuclear copper A center (CU(A)) of subunit 2 and heme A of subunit 1 to the active site in subunit 1, a binuclear center (BNC) formed by heme A3 and copper B (CU(B)). The BNC reduces molecular oxygen to 2 water molecules using 4 electrons from cytochrome c in the IMS and 4 protons from the mitochondrial matrix. The protein is Cytochrome c oxidase subunit 2 (MT-CO2) of Urocyon cinereoargenteus (Gray fox).